The following is a 248-amino-acid chain: Probable transcriptional regulatory protein PFL_4766 (248 aa).

The protein belongs to the TACO1 family.

Its subcellular location is the cytoplasm. The sequence is that of Probable transcriptional regulatory protein PFL_4766 from Pseudomonas fluorescens (strain ATCC BAA-477 / NRRL B-23932 / Pf-5).